We begin with the raw amino-acid sequence, 430 residues long: MVFVSDSSISLPIWDAPRARGPIVSDLAIPGSKSITNRALILAALASTPSTIIDVLRSRDTDLMTDGLRSLGITITEEAVDRYRVEPGQLSAGSVECGLAGTVMRFLPPVAAFADGPVHFDGDPQARVRPMTSILDALRSLGVEVDNNNLPFTVNAGEVPEGGVVEIDASGSSQFVSGLLLSAPRFKNGVTVKHVGGRLPSMPHIEMTVDMLRSAGIEIEESENQWVVHPGEILGRTWRIEPDLSNATPFLAAAAVTGGTIKINHWPIKTTQPGDAIRSILERMGCEVELVAQGEGYDLSVTGPVALKGIEIDMSDIGELTPTVAALAALASTESRLTGIAHLRGHETDRLAALTAEINKLGGKCTELKDGLLIEPASLHGGVWHSYADHRMATAGAIIGLAVDDVQVEDIKTTSKTFPGFENVWEEMVG.

Positions 33, 34, and 38 each coordinate 3-phosphoshikimate. Lys33 contributes to the phosphoenolpyruvate binding site. Gly101 and Arg129 together coordinate phosphoenolpyruvate. 3-phosphoshikimate-binding residues include Ser172, Ser173, Gln174, Ser201, Glu319, and His346. Gln174 contributes to the phosphoenolpyruvate binding site. Glu319 serves as the catalytic Proton acceptor. The phosphoenolpyruvate site is built by Arg350, Arg391, and Lys416.

This sequence belongs to the EPSP synthase family. Monomer.

Its subcellular location is the cytoplasm. It carries out the reaction 3-phosphoshikimate + phosphoenolpyruvate = 5-O-(1-carboxyvinyl)-3-phosphoshikimate + phosphate. It participates in metabolic intermediate biosynthesis; chorismate biosynthesis; chorismate from D-erythrose 4-phosphate and phosphoenolpyruvate: step 6/7. Catalyzes the transfer of the enolpyruvyl moiety of phosphoenolpyruvate (PEP) to the 5-hydroxyl of shikimate-3-phosphate (S3P) to produce enolpyruvyl shikimate-3-phosphate and inorganic phosphate. In Corynebacterium glutamicum (strain R), this protein is 3-phosphoshikimate 1-carboxyvinyltransferase.